The chain runs to 447 residues: Clusterin (447 aa).

Positions 1–21 (MKILLLCVALLLTWDNGMVLG) are cleaved as a signal peptide. Residues 77-80 (KKKK) carry the Nuclear localization signal motif. 5 disulfides stabilise this stretch: C101/C312, C112/C304, C115/C301, C120/C294, and C128/C284. N102 carries an N-linked (GlcNAc...) asparagine glycan. Residue S132 is modified to Phosphoserine. N-linked (GlcNAc...) asparagine glycosylation is found at N144, N290, N327, N353, and N373. At S394 the chain carries Phosphoserine. A Nuclear localization signal motif is present at residues 441-445 (RRKSR).

The protein belongs to the clusterin family. As to quaternary structure, antiparallel disulfide-linked heterodimer of an alpha chain and a beta chain. Self-associates and forms higher oligomers. Interacts with a broad range of misfolded proteins, including APP, APOC2 and LYZ. Slightly acidic pH promotes interaction with misfolded proteins. Forms high-molecular weight oligomers upon interaction with misfolded proteins. Interacts with APOA1, LRP2, CLUAP1 and PON1. Interacts with the complement membrane attack complex. Interacts (via alpha chain) with XRCC6. Interacts with SYVN1, COMMD1, BTRC, CUL1 and with ubiquitin and SCF (SKP1-CUL1-F-box protein) E3 ubiquitin-protein ligase complexes. Interacts (via alpha chain) with BAX in stressed cells, where BAX undergoes a conformation change leading to association with the mitochondrial membrane. Does not interact with BAX in unstressed cells. Found in a complex with LTF, CLU, EPPIN and SEMG1. Interacts (immaturely glycosylated pre-secreted form) with HSPA5; this interaction promotes CLU stability and facilitates stress-induced CLU retrotranslocation from the secretory pathway to the mitochondria, thereby reducing stress-induced apoptosis by stabilizing mitochondrial membrane integrity. Interacts with BCL2L1; this interaction releases and activates BAX and promotes cell death. Interacts with TGFBR2 and ACVR1. Interacts (secreted form) with STMN3; this interaction may act as an important modulator during neuronal differentiation. Interacts with VLDLR and LRP8. Post-translationally, proteolytically cleaved on its way through the secretory system, probably within the Golgi lumen. Proteolytic cleavage is not necessary for its chaperone activity. All non-secreted forms are not proteolytically cleaved. Chaperone activity of uncleaved forms is dependent on a non-reducing environment. Polyubiquitinated, leading to proteasomal degradation. Under cellular stress, the intracellular level of cleaved form is reduced due to proteasomal degradation. In terms of processing, extensively glycosylated with sulfated N-linked carbohydrates. About 30% of the protein mass is comprised of complex N-linked carbohydrate. Endoplasmic reticulum (ER) stress induces changes in glycosylation status and increases level of hypoglycosylated forms. Core carbohydrates are essential for chaperone activity. Non-secreted forms are hypoglycosylated or unglycosylated. As to expression, detected in Sertoli cells (at protein level). Detected in cultured Sertoli cells, testis, epididymis, liver and brain.

Its subcellular location is the secreted. The protein resides in the nucleus. It is found in the cytoplasm. It localises to the mitochondrion membrane. The protein localises to the cytosol. Its subcellular location is the microsome. The protein resides in the endoplasmic reticulum. It is found in the mitochondrion. It localises to the perinuclear region. The protein localises to the cytoplasmic vesicle. Its subcellular location is the secretory vesicle. The protein resides in the chromaffin granule. Functionally, functions as extracellular chaperone that prevents aggregation of non native proteins. Prevents stress-induced aggregation of blood plasma proteins. Inhibits formation of amyloid fibrils by APP, APOC2, B2M, CALCA, CSN3, SNCA and aggregation-prone LYZ variants (in vitro). Does not require ATP. Maintains partially unfolded proteins in a state appropriate for subsequent refolding by other chaperones, such as HSPA8/HSC70. Does not refold proteins by itself. Binding to cell surface receptors triggers internalization of the chaperone-client complex and subsequent lysosomal or proteasomal degradation. When secreted, protects cells against apoptosis and against cytolysis by complement: inhibits assembly of the complement membrane attack complex (MAC) by preventing polymerization of C9 pore component of the MAC complex. Intracellular forms interact with ubiquitin and SCF (SKP1-CUL1-F-box protein) E3 ubiquitin-protein ligase complexes and promote the ubiquitination and subsequent proteasomal degradation of target proteins. Promotes proteasomal degradation of COMMD1 and IKBKB. Modulates NF-kappa-B transcriptional activity. Following stress, promotes apoptosis. Inhibits apoptosis when associated with the mitochondrial membrane by interference with BAX-dependent release of cytochrome c into the cytoplasm. Plays a role in the regulation of cell proliferation. An intracellular form suppresses stress-induced apoptosis by stabilizing mitochondrial membrane integrity through interaction with HSPA5. Secreted form does not affect caspase or BAX-mediated intrinsic apoptosis and TNF-induced NF-kappa-B-activity. Secreted form act as an important modulator during neuronal differentiation through interaction with STMN3. Plays a role in the clearance of immune complexes that arise during cell injury. The protein is Clusterin of Rattus norvegicus (Rat).